Here is a 167-residue protein sequence, read N- to C-terminus: Histidinol dehydrogenase (167 aa).

Gln-109 and His-112 together coordinate Zn(2+).

The protein belongs to the histidinol dehydrogenase family. Homodimer. Requires Zn(2+) as cofactor.

It carries out the reaction L-histidinol + 2 NAD(+) + H2O = L-histidine + 2 NADH + 3 H(+). It functions in the pathway amino-acid biosynthesis; L-histidine biosynthesis; L-histidine from 5-phospho-alpha-D-ribose 1-diphosphate: step 9/9. In terms of biological role, catalyzes the sequential NAD-dependent oxidations of L-histidinol to L-histidinaldehyde and then to L-histidine. This is Histidinol dehydrogenase (hisD) from Salmonella enteritidis.